Consider the following 485-residue polypeptide: Probable L-xylulose kinase (485 aa).

It belongs to the FGGY kinase family. As to quaternary structure, homodimer.

It catalyses the reaction L-xylulose + ATP = L-xylulose 5-phosphate + ADP + H(+). The protein is Probable L-xylulose kinase (lyx) of Haemophilus influenzae (strain ATCC 51907 / DSM 11121 / KW20 / Rd).